The chain runs to 187 residues: Ribosome-recycling factor (187 aa).

It belongs to the RRF family.

Its subcellular location is the cytoplasm. Its function is as follows. Responsible for the release of ribosomes from messenger RNA at the termination of protein biosynthesis. May increase the efficiency of translation by recycling ribosomes from one round of translation to another. This is Ribosome-recycling factor from Bradyrhizobium sp. (strain ORS 278).